The sequence spans 60 residues: Large ribosomal subunit protein bL32 (60 aa).

A disordered region spans residues 1-27 (MAVPRNRLSNARKNSKRAHHAKKPKSL). A compositionally biased stretch (basic residues) spans 13-25 (KNSKRAHHAKKPK).

The protein belongs to the bacterial ribosomal protein bL32 family.

This is Large ribosomal subunit protein bL32 from Protochlamydia amoebophila (strain UWE25).